Reading from the N-terminus, the 638-residue chain is Threonine--tRNA ligase (638 aa).

One can recognise a TGS domain in the interval 1 to 61; the sequence is MPKITLPDGT…KNDSKVVIIT (61 aa). The tract at residues 242–533 is catalytic; sequence DHRKLGKKHS…LIEQYEAKFP (292 aa). Zn(2+) is bound by residues Cys333, His384, and His510.

This sequence belongs to the class-II aminoacyl-tRNA synthetase family. In terms of assembly, homodimer. It depends on Zn(2+) as a cofactor.

It is found in the cytoplasm. It carries out the reaction tRNA(Thr) + L-threonine + ATP = L-threonyl-tRNA(Thr) + AMP + diphosphate + H(+). Catalyzes the attachment of threonine to tRNA(Thr) in a two-step reaction: L-threonine is first activated by ATP to form Thr-AMP and then transferred to the acceptor end of tRNA(Thr). Also edits incorrectly charged L-seryl-tRNA(Thr). The chain is Threonine--tRNA ligase from Prochlorococcus marinus (strain MIT 9515).